Consider the following 777-residue polypeptide: Zinc finger FYVE domain-containing protein 1 (777 aa).

Residues 416 to 777 (MAHSSFFPDE…FNCNKKPGDL (362 aa)) are required for localization in the lipid droplets. FYVE-type zinc fingers lie at residues 598 to 659 (NSQI…DARN) and 715 to 775 (DHEI…KKPG). Zn(2+) is bound by residues Cys604, Cys607, Cys620, Cys623, Cys628, Cys631, Cys651, Cys654, Cys721, Cys724, Cys737, Cys740, Cys745, Cys748, Cys767, and Cys770.

In terms of assembly, interacts with RAB18 (in GTP-bound form). Interacts with BSCL2 in a RAB18-dependent manner. Interacts with ZW10. In terms of tissue distribution, ubiquitous.

It is found in the golgi apparatus. It localises to the golgi stack. The protein resides in the endoplasmic reticulum. Its subcellular location is the preautophagosomal structure. The protein localises to the lipid droplet. It is found in the mitochondrion. Functionally, plays a role in the formation of lipid droplets (LDs) which are storage organelles at the center of lipid and energy homeostasis. Regulates the morphology, size and distribution of LDs. Mediates the formation of endoplasmic reticulum-lipid droplets (ER-LD) contact sites by forming a complex with RAB18 and ZW10. Binds to phosphatidylinositol 3-phosphate (PtdIns3P) through FYVE-type zinc finger. In Mus musculus (Mouse), this protein is Zinc finger FYVE domain-containing protein 1 (Zfyve1).